Here is a 225-residue protein sequence, read N- to C-terminus: NAD(P)H-quinone oxidoreductase subunit K, chloroplastic (225 aa).

The [4Fe-4S] cluster site is built by cysteine 43, cysteine 44, cysteine 108, and cysteine 139.

It belongs to the complex I 20 kDa subunit family. NDH is composed of at least 16 different subunits, 5 of which are encoded in the nucleus. It depends on [4Fe-4S] cluster as a cofactor.

It localises to the plastid. The protein resides in the chloroplast thylakoid membrane. The catalysed reaction is a plastoquinone + NADH + (n+1) H(+)(in) = a plastoquinol + NAD(+) + n H(+)(out). The enzyme catalyses a plastoquinone + NADPH + (n+1) H(+)(in) = a plastoquinol + NADP(+) + n H(+)(out). Its function is as follows. NDH shuttles electrons from NAD(P)H:plastoquinone, via FMN and iron-sulfur (Fe-S) centers, to quinones in the photosynthetic chain and possibly in a chloroplast respiratory chain. The immediate electron acceptor for the enzyme in this species is believed to be plastoquinone. Couples the redox reaction to proton translocation, and thus conserves the redox energy in a proton gradient. This Crucihimalaya wallichii (Rock-cress) protein is NAD(P)H-quinone oxidoreductase subunit K, chloroplastic.